The sequence spans 317 residues: Ornithine carbamoyltransferase (317 aa).

Residues 54 to 57 (STRT), glutamine 81, arginine 105, and 132 to 135 (HPCQ) contribute to the carbamoyl phosphate site. Residues asparagine 163, aspartate 227, and 231-232 (SM) each bind L-ornithine. Carbamoyl phosphate is bound by residues 267–268 (CL) and arginine 295.

It belongs to the aspartate/ornithine carbamoyltransferase superfamily. OTCase family.

The protein resides in the cytoplasm. The catalysed reaction is carbamoyl phosphate + L-ornithine = L-citrulline + phosphate + H(+). The protein operates within amino-acid biosynthesis; L-arginine biosynthesis; L-arginine from L-ornithine and carbamoyl phosphate: step 1/3. Reversibly catalyzes the transfer of the carbamoyl group from carbamoyl phosphate (CP) to the N(epsilon) atom of ornithine (ORN) to produce L-citrulline. This chain is Ornithine carbamoyltransferase, found in Parafrankia sp. (strain EAN1pec).